Reading from the N-terminus, the 964-residue chain is Syndetin (964 aa).

Residue Met-1 is modified to N-acetylmethionine. The tract at residues 1–25 is disordered; sequence MQKIKSLMTRQGLKSPPESLNDLGA. Ser-15 carries the phosphoserine modification. 2 coiled-coil regions span residues 81–107 and 216–244; these read LNLQ…VADL and YSCI…LSKI. Residues Ser-494, Ser-498, Ser-559, and Ser-561 each carry the phosphoserine modification. The disordered stretch occupies residues 532–563; that stretch reads DEETEDVLASNGYESDEQEKSAYQDYDSDSDV. Lys-963 participates in a covalent cross-link: Glycyl lysine isopeptide (Lys-Gly) (interchain with G-Cter in SUMO1); alternate. A Glycyl lysine isopeptide (Lys-Gly) (interchain with G-Cter in SUMO2); alternate cross-link involves residue Lys-963.

It belongs to the syndetin family. As to quaternary structure, component of the endosome-associated retrograde protein (EARP) complex, composed of VPS51, VPS52, VPS53 and VPS50/Syndetin. The EARP complex interacts with EIPR1. Interacts with VPS51 and VPS53 in an EIPR1-independent manner. As to expression, expressed in the brain (at protein level).

The protein resides in the recycling endosome. The protein localises to the membrane. Functionally, acts as a component of the EARP complex that is involved in endocytic recycling. The EARP complex associates with Rab4-positive endosomes and promotes recycling of internalized transferrin receptor (TFRC) to the plasma membrane. Within the EARP complex, required to tether the complex to recycling endosomes. Not involved in retrograde transport from early and late endosomes to the trans-Golgi network (TGN). This chain is Syndetin, found in Rattus norvegicus (Rat).